Here is a 196-residue protein sequence, read N- to C-terminus: Protein GrpE (196 aa).

The disordered stretch occupies residues 1-39 (MSSKEQKTPEGQAPEEIIMDQHEEIEAVEPEASAEQVDP).

Belongs to the GrpE family. In terms of assembly, homodimer.

Its subcellular location is the cytoplasm. In terms of biological role, participates actively in the response to hyperosmotic and heat shock by preventing the aggregation of stress-denatured proteins, in association with DnaK and GrpE. It is the nucleotide exchange factor for DnaK and may function as a thermosensor. Unfolded proteins bind initially to DnaJ; upon interaction with the DnaJ-bound protein, DnaK hydrolyzes its bound ATP, resulting in the formation of a stable complex. GrpE releases ADP from DnaK; ATP binding to DnaK triggers the release of the substrate protein, thus completing the reaction cycle. Several rounds of ATP-dependent interactions between DnaJ, DnaK and GrpE are required for fully efficient folding. The protein is Protein GrpE of Escherichia coli O139:H28 (strain E24377A / ETEC).